The primary structure comprises 263 residues: Probable ABC transporter permease protein slr1045 (263 aa).

Transmembrane regions (helical) follow at residues 12–32 (LWFQ…LHIL), 52–72 (SMAI…IQVA), 97–117 (APVL…AAEI), 140–162 (LVVP…SLFV), 167–186 (GLVI…LNSV), 192–212 (LWDV…IAII), and 234–254 (AVVT…WLMF).

The protein belongs to the MlaE permease family.

It localises to the cell membrane. In terms of biological role, could be part of an ABC transporter complex. This Synechocystis sp. (strain ATCC 27184 / PCC 6803 / Kazusa) protein is Probable ABC transporter permease protein slr1045.